Consider the following 393-residue polypeptide: S-adenosylmethionine synthase (393 aa).

His-16 is an ATP binding site. Asp-18 is a Mg(2+) binding site. Glu-44 provides a ligand contact to K(+). Residues Glu-57 and Gln-100 each contribute to the L-methionine site. The segment at 100–110 is flexible loop; it reads QSNDIAQGVDH. ATP is bound by residues 167 to 169, 238 to 239, Asp-247, 253 to 254, Ala-270, and Lys-274; these read DAK, RF, and RK. Asp-247 is an L-methionine binding site. Lys-278 contributes to the L-methionine binding site.

It belongs to the AdoMet synthase family. Homotetramer; dimer of dimers. The cofactor is Mg(2+). K(+) serves as cofactor.

It localises to the cytoplasm. The catalysed reaction is L-methionine + ATP + H2O = S-adenosyl-L-methionine + phosphate + diphosphate. The protein operates within amino-acid biosynthesis; S-adenosyl-L-methionine biosynthesis; S-adenosyl-L-methionine from L-methionine: step 1/1. Functionally, catalyzes the formation of S-adenosylmethionine (AdoMet) from methionine and ATP. The overall synthetic reaction is composed of two sequential steps, AdoMet formation and the subsequent tripolyphosphate hydrolysis which occurs prior to release of AdoMet from the enzyme. The chain is S-adenosylmethionine synthase from Polaromonas sp. (strain JS666 / ATCC BAA-500).